The chain runs to 127 residues: Egg cell-secreted protein 1.4 (127 aa).

The N-terminal stretch at 1–25 is a signal peptide; the sequence is MASNTTFLFSTVTLLIILLNTTVSG.

Belongs to the plant egg cell-secreted peptide family. Restricted to female reproductive tissues, specifically accumulating in storage vesicles of the unfertilized egg cell.

It localises to the cytoplasmic vesicle. The protein localises to the secreted. Its function is as follows. Involved in the regulation of gamete interactions during the double fertilization and to prevent multiple-pollen tube attraction; mediates the redistribution of the gamete fusogen HAP2/GCS1 to the cell surface after secretion upon sperm arrival. This chain is Egg cell-secreted protein 1.4 (EC1.4), found in Arabidopsis thaliana (Mouse-ear cress).